The chain runs to 637 residues: Threonine--tRNA ligase (637 aa).

The TGS domain maps to 1–61 (MLNITLPDGS…VEDSAVQIIT (61 aa)). The interval 242 to 533 (DHRKLGKQLD…LIENHAGSFP (292 aa)) is catalytic. Zn(2+) is bound by residues Cys333, His384, and His510.

Belongs to the class-II aminoacyl-tRNA synthetase family. Homodimer. Zn(2+) serves as cofactor.

It localises to the cytoplasm. It catalyses the reaction tRNA(Thr) + L-threonine + ATP = L-threonyl-tRNA(Thr) + AMP + diphosphate + H(+). Functionally, catalyzes the attachment of threonine to tRNA(Thr) in a two-step reaction: L-threonine is first activated by ATP to form Thr-AMP and then transferred to the acceptor end of tRNA(Thr). Also edits incorrectly charged L-seryl-tRNA(Thr). This Neisseria meningitidis serogroup B (strain ATCC BAA-335 / MC58) protein is Threonine--tRNA ligase.